We begin with the raw amino-acid sequence, 580 residues long: E3 ubiquitin-protein ligase TRIM45 (580 aa).

Residues 29–98 (CPLCLGLFKA…QIGILCPVCD (70 aa)) form an RING-type zinc finger. 2 consecutive B box-type zinc fingers follow at residues 130-176 (GQGL…MVDL) and 186-227 (GKPI…CDFT). Zn(2+)-binding residues include Cys135, Cys138, Cys158, His162, Cys191, His194, Cys214, and His219. Residues 281-335 (SEGYIKAIEEHRDKLLKQLEDIRAQKENSLQLQKAQLEQLLADMRTGVEFTEHLL) adopt a coiled-coil conformation. A Filamin repeat occupies 394 to 497 (TKEVDPAKCV…VQGSPFTVMV (104 aa)).

Belongs to the TRIM/RBCC family. Expressed in skeletal muscle, brain, heart and pancreas.

It localises to the cytoplasm. The protein localises to the nucleus. It catalyses the reaction S-ubiquitinyl-[E2 ubiquitin-conjugating enzyme]-L-cysteine + [acceptor protein]-L-lysine = [E2 ubiquitin-conjugating enzyme]-L-cysteine + N(6)-ubiquitinyl-[acceptor protein]-L-lysine.. E3 ubiquitin-protein ligase that plays a role in the regulation of inflammatory response. Mechanistically, mediates the 'Lys-48'-linked polyubiquitination of TAB2, a regulatory protein of the kinase TAK1, leading to its degradation via the proteasomal pathway and inhibition of the TLR-mediated inflammatory immune response. May act as a transcriptional repressor in mitogen-activated protein kinase signaling pathway. The polypeptide is E3 ubiquitin-protein ligase TRIM45 (TRIM45) (Homo sapiens (Human)).